An 86-amino-acid chain; its full sequence is NADH-ubiquinone oxidoreductase chain 4L (86 aa).

2 consecutive transmembrane segments (helical) span residues 22–42 and 52–72; these read LLVT…LLVY and FIFL…LVSL.

Belongs to the complex I subunit 4L family.

Its subcellular location is the mitochondrion membrane. The catalysed reaction is a ubiquinone + NADH + 5 H(+)(in) = a ubiquinol + NAD(+) + 4 H(+)(out). Functionally, core subunit of the mitochondrial membrane respiratory chain NADH dehydrogenase (Complex I) that is believed to belong to the minimal assembly required for catalysis. Complex I functions in the transfer of electrons from NADH to the respiratory chain. The immediate electron acceptor for the enzyme is believed to be ubiquinone. The protein is NADH-ubiquinone oxidoreductase chain 4L (ND4L) of Artemia salina (Brine shrimp).